The chain runs to 295 residues: Protoheme IX farnesyltransferase (295 aa).

Helical transmembrane passes span 30-50, 51-71, 93-115, 119-136, 148-168, 175-195, 219-239, 244-264, and 275-295; these read LVVL…HPLI, AVIS…INMW, ISRS…IMMI, YISG…IYVY, IVIG…SVTG, LVLF…LSLL, IHIL…GLFL, LYEI…FQVF, and MFTY…LSSF.

It belongs to the UbiA prenyltransferase family. Protoheme IX farnesyltransferase subfamily.

The protein localises to the cell inner membrane. The catalysed reaction is heme b + (2E,6E)-farnesyl diphosphate + H2O = Fe(II)-heme o + diphosphate. It functions in the pathway porphyrin-containing compound metabolism; heme O biosynthesis; heme O from protoheme: step 1/1. Its function is as follows. Converts heme B (protoheme IX) to heme O by substitution of the vinyl group on carbon 2 of heme B porphyrin ring with a hydroxyethyl farnesyl side group. The polypeptide is Protoheme IX farnesyltransferase (Ehrlichia ruminantium (strain Welgevonden)).